The sequence spans 355 residues: Electron transfer flavoprotein subunit alpha, mitochondrial (355 aa).

295–323 (LYIAVGISGAIQHLAGMKDSKVIVAINKD) is a binding site for FAD.

This sequence belongs to the ETF alpha-subunit/FixB family. Heterodimer of an alpha and a beta subunit. Requires FAD as cofactor.

The protein localises to the mitochondrion matrix. Functionally, the electron transfer flavoprotein serves as a specific electron acceptor for several dehydrogenases, including five acyl-CoA dehydrogenases, glutaryl-CoA and sarcosine dehydrogenase. It transfers the electrons to the main mitochondrial respiratory chain via ETF-ubiquinone oxidoreductase (ETF dehydrogenase). The chain is Electron transfer flavoprotein subunit alpha, mitochondrial (etfa) from Dictyostelium discoideum (Social amoeba).